A 70-amino-acid chain; its full sequence is Adenylate kinase (70 aa).

10-15 (GAGKGT) contributes to the ATP binding site. The tract at residues 30–59 (STGDLFRANISKQTELGKLAKSYMDKGELV) is NMP. AMP is bound by residues threonine 31, arginine 36, and 57 to 59 (ELV).

It belongs to the adenylate kinase family. In terms of assembly, monomer.

The protein resides in the cytoplasm. The catalysed reaction is AMP + ATP = 2 ADP. Its pathway is purine metabolism; AMP biosynthesis via salvage pathway; AMP from ADP: step 1/1. Its function is as follows. Catalyzes the reversible transfer of the terminal phosphate group between ATP and AMP. Plays an important role in cellular energy homeostasis and in adenine nucleotide metabolism. The sequence is that of Adenylate kinase (adk) from Streptomyces scabiei.